We begin with the raw amino-acid sequence, 349 residues long: Protein-glutamate methylesterase/protein-glutamine glutaminase (349 aa).

The Response regulatory domain maps to 5-122; the sequence is RVLCVDDSAL…REGMLAYSEL (118 aa). Asp56 carries the post-translational modification 4-aspartylphosphate. One can recognise a CheB-type methylesterase domain in the interval 152–344; that stretch reads LLSSEKLIAI…QRMLAQISSG (193 aa). Residues Ser164, His190, and Asp286 contribute to the active site.

The protein belongs to the CheB family. Phosphorylated by CheA. Phosphorylation of the N-terminal regulatory domain activates the methylesterase activity.

The protein resides in the cytoplasm. The enzyme catalyses [protein]-L-glutamate 5-O-methyl ester + H2O = L-glutamyl-[protein] + methanol + H(+). It carries out the reaction L-glutaminyl-[protein] + H2O = L-glutamyl-[protein] + NH4(+). Its function is as follows. Involved in chemotaxis. Part of a chemotaxis signal transduction system that modulates chemotaxis in response to various stimuli. Catalyzes the demethylation of specific methylglutamate residues introduced into the chemoreceptors (methyl-accepting chemotaxis proteins or MCP) by CheR. Also mediates the irreversible deamidation of specific glutamine residues to glutamic acid. The sequence is that of Protein-glutamate methylesterase/protein-glutamine glutaminase from Yersinia pestis bv. Antiqua (strain Antiqua).